The chain runs to 123 residues: Small ribosomal subunit protein uS13 (123 aa).

Positions 92–123 are disordered; it reads HRRGLPVRGQKTKTNARTRKGPKKLVVSRKKK.

This sequence belongs to the universal ribosomal protein uS13 family. As to quaternary structure, part of the 30S ribosomal subunit. Forms a loose heterodimer with protein S19. Forms two bridges to the 50S subunit in the 70S ribosome.

Located at the top of the head of the 30S subunit, it contacts several helices of the 16S rRNA. In the 70S ribosome it contacts the 23S rRNA (bridge B1a) and protein L5 of the 50S subunit (bridge B1b), connecting the 2 subunits; these bridges are implicated in subunit movement. Contacts the tRNAs in the A and P-sites. The sequence is that of Small ribosomal subunit protein uS13 from Clostridium tetani (strain Massachusetts / E88).